Reading from the N-terminus, the 177-residue chain is Trafficking regulator of GLUT4 1 (177 aa).

Residues 1–105 (MAHPVQSEFP…QDQEAPRDYL (105 aa)) lie on the Cytoplasmic side of the membrane. Phosphoserine is present on residues S48, S87, and S88. The interval 71-92 (EAPLPRSPSRASSRRASSIATT) is disordered. Residues 72–88 (APLPRSPSRASSRRASS) show a composition bias toward low complexity. Residues 106–126 (ILAVVACFCPVWPLNLIPLII) constitute an intramembrane region (helical). The Cytoplasmic portion of the chain corresponds to 127-153 (SIMSRSSMQQGNVDGARRLGRLARLLS). A helical membrane pass occupies residues 154–174 (ITLIIMGIVIIMVAVTVNFTV). At 175-177 (QKK) the chain is on the extracellular side.

The protein belongs to the CD225/Dispanin family. In terms of assembly, interacts with SLC2A4; the interaction is required for proper SLC2A4 reacycling after insulin stimulation. As to expression, expressed at high levels in heart, mammary gland, adrenal gland, stomach, smooth muscle and skeletal muscle, and at lower levels in brain and lung. Strongly down-regulated in lung cancer tissues, due to hypermethylation of the corresponding locus. Expressed in adipose tissue.

The protein resides in the cell membrane. It is found in the endomembrane system. Its subcellular location is the cytoplasm. The protein localises to the perinuclear region. Functionally, regulates insulin-mediated adipose tissue glucose uptake and transport by modulation of SLC2A4 recycling. Not required for SLC2A4 membrane fusion upon an initial stimulus, but rather is necessary for proper protein recycling during prolonged insulin stimulation. The protein is Trafficking regulator of GLUT4 1 of Homo sapiens (Human).